Consider the following 292-residue polypeptide: Glycine-rich RNA-binding protein RZ1B (292 aa).

Positions 12 to 90 (SRIFVGGLSW…KVISVNKAEP (79 aa)) constitute an RRM domain. Ser20 bears the Phosphoserine mark. Positions 93-114 (GGEDVDQLKKGGGYSSRGKGTE) are disordered. Residues 117-132 (CFKCRRPGHWARDCPS) form a CCHC-type zinc finger. 2 stretches are compositionally biased toward basic and acidic residues: residues 180–210 (DGRR…HYPF) and 220–268 (FVSD…EGRP). A disordered region spans residues 180-292 (DGRRDRDGGR…GGRPSSYERW (113 aa)).

As to expression, expressed in roots, rosette and cauline leaves, stems, floral buds and flowers.

It is found in the nucleus. Functionally, binds RNA and DNA sequences non-specifically. May be involved in tolerance to cold stress. The sequence is that of Glycine-rich RNA-binding protein RZ1B from Arabidopsis thaliana (Mouse-ear cress).